Consider the following 525-residue polypeptide: Polyamine aminopropyltransferase 1 (525 aa).

6 helical membrane-spanning segments follow: residues alanine 21–alanine 41, isoleucine 53–valine 73, leucine 89–alanine 109, leucine 117–valine 137, valine 155–alanine 175, and leucine 180–tryptophan 200. One can recognise a PABS domain in the interval alanine 220–proline 464. Positions methionine 222 to proline 471 are spermidine synthase. Glutamine 259 is an S-methyl-5'-thioadenosine binding site. Residues histidine 289 and aspartate 313 each contribute to the spermidine site. S-methyl-5'-thioadenosine is bound by residues aspartate 333 and aspartate 367–alanine 368. Catalysis depends on aspartate 385, which acts as the Proton acceptor.

It belongs to the spermidine/spermine synthase family. As to quaternary structure, homodimer or homotetramer.

The protein localises to the cell membrane. It carries out the reaction S-adenosyl 3-(methylsulfanyl)propylamine + putrescine = S-methyl-5'-thioadenosine + spermidine + H(+). The protein operates within amine and polyamine biosynthesis; spermidine biosynthesis; spermidine from putrescine: step 1/1. Its function is as follows. Catalyzes the irreversible transfer of a propylamine group from the amino donor S-adenosylmethioninamine (decarboxy-AdoMet) to putrescine (1,4-diaminobutane) to yield spermidine. This chain is Polyamine aminopropyltransferase 1, found in Ralstonia nicotianae (strain ATCC BAA-1114 / GMI1000) (Ralstonia solanacearum).